Here is a 380-residue protein sequence, read N- to C-terminus: Cytochrome b (380 aa).

A run of 4 helical transmembrane segments spans residues F33–M53, W77–V98, W113–L133, and F178–L198. Heme b-binding residues include H83 and H97. Heme b-binding residues include H182 and H196. H201 is an a ubiquinone binding site. 4 helical membrane-spanning segments follow: residues I226–F246, L288–N308, L320–G340, and F347–P367.

Belongs to the cytochrome b family. As to quaternary structure, the cytochrome bc1 complex contains 11 subunits: 3 respiratory subunits (MT-CYB, CYC1 and UQCRFS1), 2 core proteins (UQCRC1 and UQCRC2) and 6 low-molecular weight proteins (UQCRH/QCR6, UQCRB/QCR7, UQCRQ/QCR8, UQCR10/QCR9, UQCR11/QCR10 and a cleavage product of UQCRFS1). This cytochrome bc1 complex then forms a dimer. Requires heme b as cofactor.

Its subcellular location is the mitochondrion inner membrane. In terms of biological role, component of the ubiquinol-cytochrome c reductase complex (complex III or cytochrome b-c1 complex) that is part of the mitochondrial respiratory chain. The b-c1 complex mediates electron transfer from ubiquinol to cytochrome c. Contributes to the generation of a proton gradient across the mitochondrial membrane that is then used for ATP synthesis. This chain is Cytochrome b (MT-CYB), found in Thomasomys notatus (Distinguished oldfield mouse).